The following is a 735-amino-acid chain: E3 UFM1-protein ligase 1 homolog (735 aa).

The disordered stretch occupies residues 389 to 445 (RLEAEKKKQGGAKAAVKVQEETDDWGDGKKGGKGGKKNAKSVKGGSKSSAPSTSSNL). The segment covering 419–428 (GGKGGKKNAK) has biased composition (basic residues). Low complexity predominate over residues 429-445 (SVKGGSKSSAPSTSSNL).

Belongs to the UFL1 family.

E3 UFM1-protein ligase that mediates ufmylation of target proteins. The chain is E3 UFM1-protein ligase 1 homolog (ufl-1) from Caenorhabditis elegans.